Consider the following 590-residue polypeptide: ATP-dependent zinc metalloprotease FtsH 1 (590 aa).

The Cytoplasmic segment spans residues 1-8; the sequence is MLKLTKKQ. Residues 9–29 traverse the membrane as a helical segment; the sequence is LIIVLGIAIVVVSAIGYAVYT. Residues 30–103 are Extracellular-facing; that stretch reads QYFNEDKLEI…QVRETTDQYS (74 aa). A helical transmembrane segment spans residues 104-124; that stretch reads VVQVITFVVLIGGFIGVAIFL. The Cytoplasmic portion of the chain corresponds to 125–590; that stretch reads SKKNATQTSK…NEIFSGFQSM (466 aa). 195-202 contacts ATP; it reads GSPGTGKT. His-418 contacts Zn(2+). Glu-419 is a catalytic residue. Zn(2+)-binding residues include His-422 and Asp-496.

This sequence in the central section; belongs to the AAA ATPase family. In the C-terminal section; belongs to the peptidase M41 family. As to quaternary structure, homohexamer. It depends on Zn(2+) as a cofactor.

Its subcellular location is the cell membrane. Functionally, acts as a processive, ATP-dependent zinc metallopeptidase for both cytoplasmic and membrane proteins. Plays a role in the quality control of integral membrane proteins. In Alkaliphilus metalliredigens (strain QYMF), this protein is ATP-dependent zinc metalloprotease FtsH 1.